We begin with the raw amino-acid sequence, 310 residues long: Glucan endo-1,3-beta-glucosidase GI (310 aa).

The active-site Proton donor is Glu96. The active-site Nucleophile is Glu234.

This sequence belongs to the glycosyl hydrolase 17 family. Monomer. Young leaves and roots.

The catalysed reaction is Hydrolysis of (1-&gt;3)-beta-D-glucosidic linkages in (1-&gt;3)-beta-D-glucans.. May provide a degree of protection against microbial invasion of germinated barley grain through its ability to degrade fungal cell wall polysaccharides. Does not hydrolyze (1,3;1,4)-beta-D-glucans, (1,6)-beta-D-glucan, CM-cellulose, insoluble (1,3)-beta-D-glucans or aryl beta-D-glycosides. This chain is Glucan endo-1,3-beta-glucosidase GI, found in Hordeum vulgare (Barley).